The sequence spans 1368 residues: Beclin-1-like protein A (1368 aa).

Low complexity-rich tracts occupy residues 24 to 57 (GSGS…NNGP) and 122 to 135 (NSII…SPSN). Disordered regions lie at residues 24-64 (GSGS…PSSE), 122-249 (NSII…SLMM), 331-431 (NKNN…STNS), 819-874 (TITP…NNNN), and 992-1048 (IDGN…NDNN). Over residues 136-147 (AITRNNSFNMDP) the composition is skewed to polar residues. The span at 148–167 (NNNNNNNNNNNNNNNNNNNN) shows a compositional bias: low complexity. Polar residues predominate over residues 168-177 (GEYMNSSIVF). A compositionally biased stretch (low complexity) spans 179–246 (NNVNNNNNNP…INNSVNSVNS (68 aa)). Composition is skewed to low complexity over residues 992–1005 (IDGN…NDNN) and 1015–1048 (NNNN…NDNN). Residues 1047-1150 (NNYNFENEIN…AIRDQLERVS (104 aa)) are a coiled coil.

The protein belongs to the beclin family.

It is found in the endosome membrane. Involved in autophagy. May be required to recruit the atg8-phosphatidylinositol conjugate and the atg12-atg5 conjugate to the pre-autophagosomal structure. Required for normal survival when exposed to pathogenic bacteria S.typhimurium by promoting autophagic degradation of intracellular S.typhimurium. This Dictyostelium discoideum (Social amoeba) protein is Beclin-1-like protein A (atg6A).